The following is a 489-amino-acid chain: Betaine aldehyde dehydrogenase (489 aa).

K(+) is bound by residues Thr-26 and Asp-93. Residue Gly-150 to Trp-152 participates in NAD(+) binding. Lys-162 functions as the Charge relay system in the catalytic mechanism. Lys-176–Glu-179 serves as a coordination point for NAD(+). Ile-180 lines the K(+) pocket. Gly-229 to Thr-232 lines the NAD(+) pocket. Position 245 (Leu-245) interacts with K(+). The Proton acceptor role is filled by Glu-251. Residues Gly-253, Cys-285, and Glu-386 each coordinate NAD(+). Catalysis depends on Cys-285, which acts as the Nucleophile. Cysteine sulfenic acid (-SOH) is present on Cys-285. Lys-456 and Gly-459 together coordinate K(+). Glu-463 functions as the Charge relay system in the catalytic mechanism.

It belongs to the aldehyde dehydrogenase family. As to quaternary structure, dimer of dimers. K(+) is required as a cofactor.

It carries out the reaction betaine aldehyde + NAD(+) + H2O = glycine betaine + NADH + 2 H(+). It participates in amine and polyamine biosynthesis; betaine biosynthesis via choline pathway; betaine from betaine aldehyde: step 1/1. In terms of biological role, involved in the biosynthesis of the osmoprotectant glycine betaine. Catalyzes the irreversible oxidation of betaine aldehyde to the corresponding acid. This Paraburkholderia phytofirmans (strain DSM 17436 / LMG 22146 / PsJN) (Burkholderia phytofirmans) protein is Betaine aldehyde dehydrogenase.